We begin with the raw amino-acid sequence, 888 residues long: Inactive deaminase YJL070C (888 aa).

The segment at 1 to 42 is disordered; sequence MQAVERRPSLLFDEYQNSVTKPNETKNKEARVLSENDGDVSP. A Phosphoserine modification is found at Ser9. A compositionally biased stretch (basic and acidic residues) spans 23-34; the sequence is NETKNKEARVLS. Phosphoserine occurs at positions 41, 178, and 180.

This sequence belongs to the metallo-dependent hydrolases superfamily. Adenosine and AMP deaminases family.

This chain is Inactive deaminase YJL070C, found in Saccharomyces cerevisiae (strain ATCC 204508 / S288c) (Baker's yeast).